The primary structure comprises 478 residues: Hemolysin secretion protein D, chromosomal (478 aa).

Over 1 to 59 the chain is Cytoplasmic; that stretch reads MKTWLMGFSEFLLRYKLVWSETWKIRKQLDTPVREKDENEFLPAHLELIETPVSRRPRL. Residues 60-80 form a helical; Signal-anchor for type II membrane protein membrane-spanning segment; sequence VAYFIMGFLVIAFILSVLGQV. Residues 81 to 478 are Periplasmic-facing; sequence EIVATANGKL…ESVTESLHER (398 aa).

Belongs to the membrane fusion protein (MFP) (TC 8.A.1) family.

The protein resides in the cell inner membrane. Involved in the transport of hemolysin A. This is Hemolysin secretion protein D, chromosomal (hlyD) from Escherichia coli.